We begin with the raw amino-acid sequence, 476 residues long: MSPQTETKASVGFKAGVKDYKLTYYTPEYETKDTDILAAFRVTPQLGVPPEEAGAAVAAESSTGTWTTVWTDGLTSLDRYKGRCYHIEPVPGDPDQYICYVAYPLDLFEEGSVTNMFTSIVGNVFGFKALRALRLEDLRIPPAYVKTFQGPPHGIQVERDKLNKYGRPLLGCTIKPKLGLSAKNYGRACYECLRGGLDFTKDDENVNSQPFMRWRDRFVFCAEAIYKAQAETGEIKGHYLNATAGTCEEMIKRAVFAKELGVPIVMHDYLTGGFTANTTLSHYCRDNGLLLHIHRAMHAVIDRQKNHGMHFRVLAKALRMSGGDHIHSGTVVGKLEGEREITLGFVDLLRDDFIEKDRSRGIFFTQDWVSMPGVIPVASGGIHVWHMPALTEIFGDDSVLQFGGGTLGHPWGNAPGAAANRVALEACVQARNEGRDLAREGNEIIKAACKWSAELAAACEIWKEIKFDTFKAMDTL.

The propeptide occupies 1-2 (MS). An N-acetylproline modification is found at proline 3. The residue at position 14 (lysine 14) is an N6,N6,N6-trimethyllysine. Substrate-binding residues include asparagine 123 and threonine 173. Catalysis depends on lysine 175, which acts as the Proton acceptor. Lysine 177 contributes to the substrate binding site. Mg(2+) contacts are provided by lysine 201, aspartate 203, and glutamate 204. N6-carboxylysine is present on lysine 201. Histidine 294 (proton acceptor) is an active-site residue. Substrate contacts are provided by arginine 295, histidine 327, and serine 379.

Belongs to the RuBisCO large chain family. Type I subfamily. Heterohexadecamer of 8 large chains and 8 small chains; disulfide-linked. The disulfide link is formed within the large subunit homodimers. Mg(2+) serves as cofactor. The disulfide bond which can form in the large chain dimeric partners within the hexadecamer appears to be associated with oxidative stress and protein turnover.

The protein resides in the plastid. It localises to the chloroplast. It carries out the reaction 2 (2R)-3-phosphoglycerate + 2 H(+) = D-ribulose 1,5-bisphosphate + CO2 + H2O. It catalyses the reaction D-ribulose 1,5-bisphosphate + O2 = 2-phosphoglycolate + (2R)-3-phosphoglycerate + 2 H(+). In terms of biological role, ruBisCO catalyzes two reactions: the carboxylation of D-ribulose 1,5-bisphosphate, the primary event in carbon dioxide fixation, as well as the oxidative fragmentation of the pentose substrate in the photorespiration process. Both reactions occur simultaneously and in competition at the same active site. This chain is Ribulose bisphosphate carboxylase large chain, found in Sorghum bicolor (Sorghum).